The chain runs to 375 residues: MVMMKKMKGSQSFRQRLLLSTLSSTPISIDEIRADETIPGLRPHEVNLLRLLEIVTDDAVVDINETGTRLKYKPGTIVGGKNLVHSCSLSRSIGYYLEPLLLLGLFGKKPLSIRLKGITNDPRDASVDTFRSTTLNIIKRFGVPAEDLELKIEARGVAPNGGGEVLLTVPNIKTLSAVHWVEEGMVKKIRGTTFSTRVTSDFEHSMRFAARGIFNNLLPDVHIFQDHRAGAQAGKSPGYGISLAAETTTGCFISADTTVSCERPDETGELDVEKKERSPAEDTGVEVASWLLQEIEKGGVVDSTHQGLLFLLCALSEQDVSKVRVGTLSPYAVETLRNIKEFLGVKFAIKPDPLTGTVILKCTGSGLINLSRKLS.

It belongs to the RNA 3'-terminal cyclase family. Type 2 subfamily.

It localises to the nucleus. The protein resides in the nucleolus. Functionally, does not have cyclase activity. Plays a role in 40S-ribosomal-subunit biogenesis in the early pre-rRNA processing steps at sites A0, A1 and A2 that are required for proper maturation of the 18S RNA. In Arabidopsis thaliana (Mouse-ear cress), this protein is Probable RNA 3'-terminal phosphate cyclase-like protein.